The sequence spans 167 residues: NADH-quinone oxidoreductase subunit B 2 (167 aa).

Residues Cys38, Cys39, Cys103, and Cys132 each coordinate [4Fe-4S] cluster.

Belongs to the complex I 20 kDa subunit family. As to quaternary structure, NDH-1 is composed of 14 different subunits. Subunits NuoB, C, D, E, F, and G constitute the peripheral sector of the complex. The cofactor is [4Fe-4S] cluster.

The protein localises to the cell inner membrane. It carries out the reaction a quinone + NADH + 5 H(+)(in) = a quinol + NAD(+) + 4 H(+)(out). NDH-1 shuttles electrons from NADH, via FMN and iron-sulfur (Fe-S) centers, to quinones in the respiratory chain. The immediate electron acceptor for the enzyme in this species is believed to be ubiquinone. Couples the redox reaction to proton translocation (for every two electrons transferred, four hydrogen ions are translocated across the cytoplasmic membrane), and thus conserves the redox energy in a proton gradient. This chain is NADH-quinone oxidoreductase subunit B 2, found in Rhizobium etli (strain CIAT 652).